The primary structure comprises 396 residues: NADH-quinone oxidoreductase subunit D (396 aa).

Belongs to the complex I 49 kDa subunit family. In terms of assembly, NDH-1 is composed of 14 different subunits. Subunits NuoB, C, D, E, F, and G constitute the peripheral sector of the complex.

The protein localises to the cell inner membrane. The enzyme catalyses a quinone + NADH + 5 H(+)(in) = a quinol + NAD(+) + 4 H(+)(out). In terms of biological role, NDH-1 shuttles electrons from NADH, via FMN and iron-sulfur (Fe-S) centers, to quinones in the respiratory chain. The immediate electron acceptor for the enzyme in this species is believed to be ubiquinone. Couples the redox reaction to proton translocation (for every two electrons transferred, four hydrogen ions are translocated across the cytoplasmic membrane), and thus conserves the redox energy in a proton gradient. The chain is NADH-quinone oxidoreductase subunit D from Brucella suis biovar 1 (strain 1330).